A 358-amino-acid chain; its full sequence is UDP-N-acetylglucosamine--N-acetylmuramyl-(pentapeptide) pyrophosphoryl-undecaprenol N-acetylglucosamine transferase (358 aa).

Residues 11–13 (TGG), asparagine 122, arginine 161, serine 189, isoleucine 243, 262–267 (ALTVCE), and glutamine 288 contribute to the UDP-N-acetyl-alpha-D-glucosamine site.

Belongs to the glycosyltransferase 28 family. MurG subfamily.

The protein localises to the cell inner membrane. It carries out the reaction di-trans,octa-cis-undecaprenyl diphospho-N-acetyl-alpha-D-muramoyl-L-alanyl-D-glutamyl-meso-2,6-diaminopimeloyl-D-alanyl-D-alanine + UDP-N-acetyl-alpha-D-glucosamine = di-trans,octa-cis-undecaprenyl diphospho-[N-acetyl-alpha-D-glucosaminyl-(1-&gt;4)]-N-acetyl-alpha-D-muramoyl-L-alanyl-D-glutamyl-meso-2,6-diaminopimeloyl-D-alanyl-D-alanine + UDP + H(+). Its pathway is cell wall biogenesis; peptidoglycan biosynthesis. In terms of biological role, cell wall formation. Catalyzes the transfer of a GlcNAc subunit on undecaprenyl-pyrophosphoryl-MurNAc-pentapeptide (lipid intermediate I) to form undecaprenyl-pyrophosphoryl-MurNAc-(pentapeptide)GlcNAc (lipid intermediate II). The protein is UDP-N-acetylglucosamine--N-acetylmuramyl-(pentapeptide) pyrophosphoryl-undecaprenol N-acetylglucosamine transferase of Coxiella burnetii (strain CbuK_Q154) (Coxiella burnetii (strain Q154)).